Consider the following 31-residue polypeptide: Unknown protein from spot 104 of 2D-PAGE of thylakoid (31 aa).

The protein resides in the plastid. The protein localises to the chloroplast thylakoid. The chain is Unknown protein from spot 104 of 2D-PAGE of thylakoid from Pisum sativum (Garden pea).